Reading from the N-terminus, the 176-residue chain is Ribosome maturation factor RimM (176 aa).

In terms of domain architecture, PRC barrel spans lysine 93–isoleucine 172.

It belongs to the RimM family. Binds ribosomal protein uS19.

The protein localises to the cytoplasm. Functionally, an accessory protein needed during the final step in the assembly of 30S ribosomal subunit, possibly for assembly of the head region. Essential for efficient processing of 16S rRNA. May be needed both before and after RbfA during the maturation of 16S rRNA. It has affinity for free ribosomal 30S subunits but not for 70S ribosomes. This Campylobacter concisus (strain 13826) protein is Ribosome maturation factor RimM.